The sequence spans 69 residues: Conotoxin LvVID (69 aa).

A signal peptide spans 1 to 17; that stretch reads VLIIAVLFLTACQLTTA. Positions 18 to 40 are excised as a propeptide; sequence ETYPRGQQRHHALRSTDKNSKLT. 3 disulfides stabilise this stretch: C43/C57, C50/C61, and C56/C68.

Belongs to the conotoxin O1 superfamily. Expressed by the venom duct.

Its subcellular location is the secreted. This chain is Conotoxin LvVID, found in Conus lividus (Livid cone).